Consider the following 148-residue polypeptide: Large ribosomal subunit protein bL9 (148 aa).

The protein belongs to the bacterial ribosomal protein bL9 family.

In terms of biological role, binds to the 23S rRNA. The polypeptide is Large ribosomal subunit protein bL9 (Dechloromonas aromatica (strain RCB)).